A 64-amino-acid polypeptide reads, in one-letter code: Large ribosomal subunit protein bL28 (64 aa).

Belongs to the bacterial ribosomal protein bL28 family.

In Bifidobacterium adolescentis (strain ATCC 15703 / DSM 20083 / NCTC 11814 / E194a), this protein is Large ribosomal subunit protein bL28.